A 494-amino-acid chain; its full sequence is Aspartyl/glutamyl-tRNA(Asn/Gln) amidotransferase subunit B (494 aa).

This sequence belongs to the GatB/GatE family. GatB subfamily. As to quaternary structure, heterotrimer of A, B and C subunits.

It carries out the reaction L-glutamyl-tRNA(Gln) + L-glutamine + ATP + H2O = L-glutaminyl-tRNA(Gln) + L-glutamate + ADP + phosphate + H(+). The catalysed reaction is L-aspartyl-tRNA(Asn) + L-glutamine + ATP + H2O = L-asparaginyl-tRNA(Asn) + L-glutamate + ADP + phosphate + 2 H(+). Its function is as follows. Allows the formation of correctly charged Asn-tRNA(Asn) or Gln-tRNA(Gln) through the transamidation of misacylated Asp-tRNA(Asn) or Glu-tRNA(Gln) in organisms which lack either or both of asparaginyl-tRNA or glutaminyl-tRNA synthetases. The reaction takes place in the presence of glutamine and ATP through an activated phospho-Asp-tRNA(Asn) or phospho-Glu-tRNA(Gln). The protein is Aspartyl/glutamyl-tRNA(Asn/Gln) amidotransferase subunit B of Synechococcus elongatus (strain ATCC 33912 / PCC 7942 / FACHB-805) (Anacystis nidulans R2).